We begin with the raw amino-acid sequence, 475 residues long: MAAGTVRGLAVAGGGESSESEDDGWEIGYLDRSAQKLKGPLLPEEKNETFKKALTTGDISLVQELLDSGLSVDSSFRYGWTPLMYAASVSNVELVRVLLDRGANASFDKDKQTILITACSARGSEEQILKCVELLLSRNADPNVACRRLMTPIMYAARDGHPQVVALLVAHGAEVNAQDENGYTALTWAARQGHKNVVLKLLELGANKMLQTKDGKTPSEIAKRNKHLEIFNFLSLTLNPLEGKLQQLTKEETICKLLTTDSDKEKDHIFSSYTAFGDLEIFLHGLGLEHMTDLLKERDITLRHLLTMRKDEFTKNGITNRDQQKILAALKELEVEEIKFGELPEVAKLEISGDEFLNFLLKLNKQCGHLITAVQNIISELPVNSHKIVLEWSSPQNFTSVCEELVSNVEDLSEEVCKLKDLIQKLQNERENDPTHIPLMEEVSTWNSRILKRTAVTVCGFGFLLFICKLTFQRK.

A disordered region spans residues 1-24; the sequence is MAAGTVRGLAVAGGGESSESEDDG. Ser17, Ser18, and Ser20 each carry phosphoserine. ANK repeat units lie at residues 45 to 74, 78 to 107, 110 to 144, 148 to 177, 181 to 210, and 214 to 243; these read EKNE…SVDS, YGWT…NASF, DKQT…DPNV, RLMT…EVNA, NGYT…NKML, and DGKT…PLEG. Residues 272–334 form the SAM domain; sequence SYTAFGDLEI…KILAALKELE (63 aa).

As to quaternary structure, interacts with DDX4, PIWIL1, RANBP9 and TDRD1.

Its subcellular location is the cytoplasm. In terms of biological role, plays a central role during spermatogenesis by repressing transposable elements and preventing their mobilization, which is essential for the germline integrity. Acts via the piRNA metabolic process, which mediates the repression of transposable elements during meiosis by forming complexes composed of piRNAs and Piwi proteins and governs the methylation and subsequent repression of transposons. Its association with pi-bodies suggests a participation in the primary piRNAs metabolic process. Required prior to the pachytene stage to facilitate the production of multiple types of piRNAs, including those associated with repeats involved in the regulation of retrotransposons. May act by mediating protein-protein interactions during germ cell maturation. In Neofelis nebulosa (Clouded leopard), this protein is Ankyrin repeat, SAM and basic leucine zipper domain-containing protein 1 (ASZ1).